Here is a 58-residue protein sequence, read N- to C-terminus: UPF0337 protein OB2685 (58 aa).

2 stretches are compositionally biased toward basic and acidic residues: residues 1 to 22 and 30 to 46; these read MSDGMKDKAKAIGKKIKGEAKD and DPQRKAEGKRDKAKGEA. The segment at 1–58 is disordered; it reads MSDGMKDKAKAIGKKIKGEAKDQWGSATDDPQRKAEGKRDKAKGEAQDTIADAKNNNK.

It belongs to the UPF0337 (CsbD) family.

The protein is UPF0337 protein OB2685 of Oceanobacillus iheyensis (strain DSM 14371 / CIP 107618 / JCM 11309 / KCTC 3954 / HTE831).